A 594-amino-acid chain; its full sequence is DNA polymerase II small subunit (594 aa).

It belongs to the DNA polymerase delta/II small subunit family. In terms of assembly, heterodimer of a large subunit and a small subunit.

The catalysed reaction is DNA(n) + a 2'-deoxyribonucleoside 5'-triphosphate = DNA(n+1) + diphosphate. It catalyses the reaction Exonucleolytic cleavage in the 3'- to 5'-direction to yield nucleoside 5'-phosphates.. Its function is as follows. Possesses two activities: a DNA synthesis (polymerase) and an exonucleolytic activity that degrades single-stranded DNA in the 3' to 5' direction. Has a template-primer preference which is characteristic of a replicative DNA polymerase. The chain is DNA polymerase II small subunit (polB) from Methanocaldococcus jannaschii (strain ATCC 43067 / DSM 2661 / JAL-1 / JCM 10045 / NBRC 100440) (Methanococcus jannaschii).